The following is a 415-amino-acid chain: Serine hydroxymethyltransferase (415 aa).

Residues L120 and 124 to 126 (GHL) contribute to the (6S)-5,6,7,8-tetrahydrofolate site. N6-(pyridoxal phosphate)lysine is present on K229.

Belongs to the SHMT family. As to quaternary structure, homodimer. It depends on pyridoxal 5'-phosphate as a cofactor.

The protein resides in the cytoplasm. It carries out the reaction (6R)-5,10-methylene-5,6,7,8-tetrahydrofolate + glycine + H2O = (6S)-5,6,7,8-tetrahydrofolate + L-serine. The protein operates within one-carbon metabolism; tetrahydrofolate interconversion. It participates in amino-acid biosynthesis; glycine biosynthesis; glycine from L-serine: step 1/1. Its function is as follows. Catalyzes the reversible interconversion of serine and glycine with tetrahydrofolate (THF) serving as the one-carbon carrier. This reaction serves as the major source of one-carbon groups required for the biosynthesis of purines, thymidylate, methionine, and other important biomolecules. Also exhibits THF-independent aldolase activity toward beta-hydroxyamino acids, producing glycine and aldehydes, via a retro-aldol mechanism. The sequence is that of Serine hydroxymethyltransferase from Pelotomaculum thermopropionicum (strain DSM 13744 / JCM 10971 / SI).